Here is a 52-residue protein sequence, read N- to C-terminus: Conotoxin Ac4.3a (52 aa).

A propeptide spanning residues 1–11 (SDFRNAAVHER) is cleaved from the precursor. Position 12 is a pyrrolidone carboxylic acid (glutamine 12). The residue at position 14 (glutamate 14) is a 4-carboxyglutamate. Residues threonine 18 and threonine 20 are each glycosylated (O-linked (HexNAc...) threonine). Proline 28, proline 33, and proline 47 each carry 4-hydroxyproline. Proline 47 carries the post-translational modification Proline amide. Residues 48-52 (GRRND) constitute a propeptide that is removed on maturation.

This sequence belongs to the conotoxin A superfamily. In terms of processing, contains 3 disulfide bonds. In terms of tissue distribution, expressed by the venom duct.

It localises to the secreted. In terms of biological role, probable neurotoxin with ion channel inhibitor activity. This is Conotoxin Ac4.3a from Conus achatinus (Little frog cone).